Consider the following 491-residue polypeptide: Diacylglycerol O-acyltransferase 1 (491 aa).

Positions 1 to 60 (MGDRGGAGGTRRRRTGSRPSSHGGGGPAAAEEEVRDAAAGPDMGAAGDAPAPAPSKDADD) are disordered. The Cytoplasmic segment spans residues 1–86 (MGDRGGAGGT…SLFSSDSGFN (86 aa)). The involved in homomerization stretch occupies residues 1–94 (MGDRGGAGGT…FNNYRGILNW (94 aa)). Phosphoserine is present on residues serine 20 and serine 21. The span at 37–50 (AAAGPDMGAAGDAP) shows a compositional bias: low complexity. A helical membrane pass occupies residues 87–121 (NYRGILNWCVVMLILSNARLFLENLIKYGILVDPI). At 122-133 (QVVSLFLKDPYS) the chain is on the lumenal side. The segment at 122–133 (QVVSLFLKDPYS) is extracellular loop 1 (EL1). A helical transmembrane segment spans residues 134-159 (WPAPCLVIAANVFAVAAFQVEKRLAV). The segment at 134-491 (WPAPCLVIAA…LNYEAPVAGA (358 aa)) is MBOAT fold. Over 160-164 (GALTE) the chain is Cytoplasmic. Residues 165 to 187 (QAGLLLHVANLATILCFPAAVVL) form a helical membrane-spanning segment. Topologically, residues 188–194 (LVESITP) are lumenal. A helical transmembrane segment spans residues 195 to 226 (VGSLLALMVHTILFLKLFSYRDVNLWCRRARA). At 227–276 (KAASAGKRASSAAAPHTVSYPDNLTYRDLYYFLFAPTLCYELNFPRSPRI) the chain is on the cytoplasmic side. Residues 227 to 279 (KAASAGKRASSAAAPHTVSYPDNLTYRDLYYFLFAPTLCYELNFPRSPRIRKR) form an intracellular loop 1 (IL1) region. Residues 277–311 (RKRFLLRRILEMLFFTQLQVGLIQQWMVPTIQNSM) traverse the membrane as a helical segment. At 312–318 (KPFKDMD) the chain is on the lumenal side. A helical membrane pass occupies residues 319 to 356 (YSRIIERLLKLAVPNHLIWLIFFYWLFHSCLNAVAELM). The Cytoplasmic portion of the chain corresponds to 357 to 402 (QFGDREFYRDWWNSESVTYFWQNWNIPVHKWCIRHFYKPMLRRGSS). The segment at 357–402 (QFGDREFYRDWWNSESVTYFWQNWNIPVHKWCIRHFYKPMLRRGSS) is intracellular loop 2 (IL2). An FYXDWWN motif motif is present at residues 363 to 369 (FYRDWWN). An acyl-CoA contacts are provided by residues 377–385 (WQNWNIPVH), tyrosine 393, and arginine 407. The interval 383–397 (PVHKWCIRHFYKPML) is amphipathic helix (AH). A helical membrane pass occupies residues 403–423 (RWMARIGVFLASAFFHEYLVS). Residue histidine 418 is part of the active site. At 424 to 431 (VPLRMFRL) the chain is on the lumenal side. Residues 432-450 (WAFTGMMAQIPLAWFVGRF) form a helical membrane-spanning segment. At 451-452 (FQ) the chain is on the cytoplasmic side. A helical transmembrane segment spans residues 453–484 (GNYGNAAVWLTLIIGQPIAVLMYVHDYYVLNY). Tyrosine 480 lines the an acyl-CoA pocket. The Lumenal portion of the chain corresponds to 485-491 (EAPVAGA).

The protein belongs to the membrane-bound acyltransferase family. Sterol o-acyltransferase subfamily. In terms of assembly, homodimer or homotetramer; both forms have similar enzymatic activities.

The protein localises to the endoplasmic reticulum membrane. It catalyses the reaction an acyl-CoA + a 1,2-diacyl-sn-glycerol = a triacyl-sn-glycerol + CoA. It carries out the reaction all-trans-retinol + an acyl-CoA = an all-trans-retinyl ester + CoA. The enzyme catalyses 2-(9Z-octadecenoyl)-glycerol + (9Z)-octadecenoyl-CoA = 1,2-di-(9Z-octadecenoyl)-sn-glycerol + CoA. The catalysed reaction is 1,2-di-(9Z-octadecenoyl)-sn-glycerol + (9Z)-octadecenoyl-CoA = 1,2,3-tri-(9Z-octadecenoyl)-glycerol + CoA. It catalyses the reaction all-trans-retinol + hexadecanoyl-CoA = all-trans-retinyl hexadecanoate + CoA. It carries out the reaction 1-O-(9Z-octadecenyl)-glycerol + (9Z)-octadecenoyl-CoA = 1-O-(9Z-octadecyl)-3-(9Z-octadecenoyl)-glycerol + CoA. The enzyme catalyses 1-O-(9Z-octadecyl)-3-(9Z-octadecenoyl)-glycerol + (9Z)-octadecenoyl-CoA = 1-O-(9Z-octadecenyl)-2,3-di-(9Z-octadecenoyl)glycerol + CoA. The catalysed reaction is 1-(9Z-octadecenoyl)-glycerol + (9Z)-octadecenoyl-CoA = 1,2-di-(9Z-octadecenoyl)-glycerol + CoA. It catalyses the reaction 1,2-di-(9Z-octadecenoyl)-glycerol + (9Z)-octadecenoate + H(+) = 1,2,3-tri-(9Z-octadecenoyl)-glycerol + H2O. It carries out the reaction 1-octadecanoyl-2-(5Z,8Z,11Z,14Z-eicosatetraenoyl)-sn-glycerol + (9Z)-octadecenoyl-CoA = 1-octadecanoyl-2-(5Z,8Z,11Z,14Z)-eicosatetraenoyl-3-(9Z)-octadecenoyl-sn-glycerol + CoA. The enzyme catalyses hexadecane-1,2-diol + 2 hexadecanoyl-CoA = 1,2-O,O-dihexadecanoyl-1,2-hexadecanediol + 2 CoA. The catalysed reaction is hexadecane-1,2-diol + hexadecanoyl-CoA = 2-hydroxyhexadecyl hexadecanoate + CoA. It catalyses the reaction 2-(9Z-octadecenoyl)-glycerol + hexadecanoyl-CoA = 1-hexadecanoyl-2-(9Z-octadecenoyl)-sn-glycerol + CoA. It carries out the reaction 1,2-di-(9Z-octadecenoyl)-sn-glycerol + hexadecanoyl-CoA = 1,2-di-(9Z)-octadecenoyl-3-hexadecanoyl-sn-glycerol + CoA. The enzyme catalyses hexadecan-1-ol + hexadecanoyl-CoA = hexadecanyl hexadecanoate + CoA. The catalysed reaction is 13-cis-retinol + hexadecanoyl-CoA = 13-cis-retinyl hexadecanoate + CoA. It catalyses the reaction 1,3-di-(9Z-octadecenoyl)-glycerol + (9Z)-octadecenoyl-CoA = 1,2,3-tri-(9Z-octadecenoyl)-glycerol + CoA. It carries out the reaction 2,3-di-(9Z)-octadecenoyl-sn-glycerol + (9Z)-octadecenoyl-CoA = 1,2,3-tri-(9Z-octadecenoyl)-glycerol + CoA. It functions in the pathway lipid metabolism; glycerolipid metabolism. Functionally, catalyzes the terminal and only committed step in triacylglycerol synthesis by using diacylglycerol and fatty acyl CoA as substrates. Highly expressed in epithelial cells of the small intestine and its activity is essential for the absorption of dietary fats. In liver, plays a role in esterifying exogenous fatty acids to glycerol, and is required to synthesize fat for storage. Also present in female mammary glands, where it produces fat in the milk. May be involved in VLDL (very low density lipoprotein) assembly. In contrast to DGAT2 it is not essential for survival. Functions as the major acyl-CoA retinol acyltransferase (ARAT) in the skin, where it acts to maintain retinoid homeostasis and prevent retinoid toxicity leading to skin and hair disorders. Exhibits additional acyltransferase activities, includin acyl CoA:monoacylglycerol acyltransferase (MGAT), wax monoester and wax diester synthases. Also able to use 1-monoalkylglycerol (1-MAkG) as an acyl acceptor for the synthesis of monoalkyl-monoacylglycerol (MAMAG). In Chlorocebus aethiops (Green monkey), this protein is Diacylglycerol O-acyltransferase 1 (DGAT1).